The chain runs to 84 residues: uncharacterized protein (84 aa).

Low complexity predominate over residues 1–14 (MQKLNKSSSKGKNN). The tract at residues 1-84 (MQKLNKSSSK…VDKGERKESE (84 aa)) is disordered. The segment covering 28-40 (STYGFGPYGGGGF) has biased composition (gly residues). Basic and acidic residues-rich tracts occupy residues 53–65 (DTKK…EEGT) and 73–84 (KLVDKGERKESE).

This is an uncharacterized protein from Schizosaccharomyces pombe (strain 972 / ATCC 24843) (Fission yeast).